A 291-amino-acid chain; its full sequence is POU class 2 homeobox associating-factor 2 (291 aa).

An OCA domain is found at 7–29 (KRVYQGVRVKHTVKDLLAEKRLR). Positions 176–219 (AAPVADSPSLAGPDSGSSSPYRLTSGRSGSSIPSSSQPYTLQPL) are disordered. Low complexity predominate over residues 200–211 (SGRSGSSIPSSS).

It belongs to the POU2AF family.

Its function is as follows. Transcriptional coactivator that may regulate cell type-specific differentiation pathways. The sequence is that of POU class 2 homeobox associating-factor 2 (pou2af2) from Danio rerio (Zebrafish).